Consider the following 232-residue polypeptide: Small ribosomal subunit protein uS5 (232 aa).

The segment at 1-47 is disordered; it reads MAAEVTETAQPVETAASTDNNREQREPRRGGRERNPNRDRGNRDADK. The segment covering 7–19 has biased composition (polar residues); the sequence is ETAQPVETAASTD. Basic and acidic residues predominate over residues 20 to 47; that stretch reads NNREQREPRRGGRERNPNRDRGNRDADK. Residues 50 to 113 enclose the S5 DRBM domain; it reads FLERVVTINR…EEAKKNFFRV (64 aa).

It belongs to the universal ribosomal protein uS5 family. In terms of assembly, part of the 30S ribosomal subunit. Contacts proteins S4 and S8.

Functionally, with S4 and S12 plays an important role in translational accuracy. Located at the back of the 30S subunit body where it stabilizes the conformation of the head with respect to the body. The sequence is that of Small ribosomal subunit protein uS5 from Leifsonia xyli subsp. xyli (strain CTCB07).